Reading from the N-terminus, the 203-residue chain is Peptide deformylase (203 aa).

Residues cysteine 130 and histidine 173 each coordinate Fe cation. Glutamate 174 is an active-site residue. Fe cation is bound at residue histidine 177.

It belongs to the polypeptide deformylase family. Fe(2+) is required as a cofactor.

The catalysed reaction is N-terminal N-formyl-L-methionyl-[peptide] + H2O = N-terminal L-methionyl-[peptide] + formate. Removes the formyl group from the N-terminal Met of newly synthesized proteins. Requires at least a dipeptide for an efficient rate of reaction. N-terminal L-methionine is a prerequisite for activity but the enzyme has broad specificity at other positions. The protein is Peptide deformylase of Streptococcus pneumoniae serotype 19F (strain G54).